Here is an 89-residue protein sequence, read N- to C-terminus: MNFSIFLFLIGILGFVLNRKNIILMLISIEIMLLSITFLILISSLSFDDILGQTFAVYIITVAGAESAIGLGILVAYYRLRGSISIQYR.

3 helical membrane-spanning segments follow: residues 1 to 21 (MNFS…NRKN), 22 to 42 (IILM…LILI), and 55 to 75 (FAVY…GILV).

The protein belongs to the complex I subunit 4L family.

It localises to the mitochondrion membrane. It catalyses the reaction a ubiquinone + NADH + 5 H(+)(in) = a ubiquinol + NAD(+) + 4 H(+)(out). In terms of biological role, core subunit of the mitochondrial membrane respiratory chain NADH dehydrogenase (Complex I) that is believed to belong to the minimal assembly required for catalysis. Complex I functions in the transfer of electrons from NADH to the respiratory chain. The immediate electron acceptor for the enzyme is believed to be ubiquinone. The sequence is that of NADH-ubiquinone oxidoreductase chain 4L (nd4L) from Aspergillus niger.